The primary structure comprises 344 residues: 2,3,4,5-tetrahydropyridine-2,6-dicarboxylate N-succinyltransferase (344 aa).

E205 provides a ligand contact to Mg(2+). E221 serves as the catalytic Acyl-anhydride intermediate. Succinyl-CoA-binding positions include R223, G238, S241, A264, E279–A280, G287, K304, and R317–S320.

This sequence belongs to the type 2 tetrahydrodipicolinate N-succinyltransferase family. As to quaternary structure, homotrimer.

It localises to the cytoplasm. It carries out the reaction (S)-2,3,4,5-tetrahydrodipicolinate + succinyl-CoA + H2O = (S)-2-succinylamino-6-oxoheptanedioate + CoA. It participates in amino-acid biosynthesis; L-lysine biosynthesis via DAP pathway; LL-2,6-diaminopimelate from (S)-tetrahydrodipicolinate (succinylase route): step 1/3. Its function is as follows. Catalyzes the conversion of the cyclic tetrahydrodipicolinate (THDP) into the acyclic N-succinyl-L-2-amino-6-oxopimelate using succinyl-CoA. The chain is 2,3,4,5-tetrahydropyridine-2,6-dicarboxylate N-succinyltransferase from Pseudomonas putida (strain ATCC 47054 / DSM 6125 / CFBP 8728 / NCIMB 11950 / KT2440).